Reading from the N-terminus, the 450-residue chain is Molybdate-anion transporter (450 aa).

Helical transmembrane passes span 1–21 (MLVT…GLEL), 43–63 (LDFY…APYL), 79–99 (ILYV…SSLV), 128–148 (FVLL…FSAF), 174–194 (AAFW…AVAS), 195–215 (WIGL…ALAG), 249–269 (VLLL…FVFL), 278–298 (GAPL…GSSL), 311–331 (PMHL…MLTF), 344–364 (FIAF…MSFL), 376–396 (GVLN…LLVL), and 409–429 (FSIC…LFTV).

It belongs to the major facilitator superfamily. Expressed ubiquitously but at relatively higher levels in the olfactory bulb and the skeletal muscle.

The protein localises to the cell membrane. Functionally, mediates high-affinity intracellular uptake of the rare oligo-element molybdenum. In Homo sapiens (Human), this protein is Molybdate-anion transporter (MFSD5).